A 173-amino-acid polypeptide reads, in one-letter code: Translocon-associated protein subunit delta (173 aa).

A signal peptide spans 1–23 (MAAMASFGALALLLLSGLSCCSA). At 24–144 (EACLEPQITP…SVDHRGTWNG (121 aa)) the chain is on the lumenal side. Cysteines 26 and 57 form a disulfide. A Glycyl lysine isopeptide (Lys-Gly) (interchain with G-Cter in ubiquitin) cross-link involves residue lysine 73. A helical transmembrane segment spans residues 145 to 165 (PWVSTEVLAAAIGIVIYYLAF). The Cytoplasmic segment spans residues 166–173 (SAKSHIQA).

The protein belongs to the TRAP-delta family. As to quaternary structure, heterotetramer of TRAP-alpha, TRAP-beta, TRAP-delta and TRAP-gamma.

Its subcellular location is the endoplasmic reticulum membrane. Its function is as follows. TRAP proteins are part of a complex whose function is to bind calcium to the ER membrane and thereby regulate the retention of ER resident proteins. The chain is Translocon-associated protein subunit delta (Ssr4) from Rattus norvegicus (Rat).